A 777-amino-acid polypeptide reads, in one-letter code: Zinc finger protein 786 (777 aa).

A KRAB domain is found at 9–80 (LTFEDVAIYF…WGEKKKPDKE (72 aa)). Residues 194 to 216 (NSCPVCRENSWEKNHLVKQQKGH) form a C2H2-type 1; degenerate zinc finger. Residues 240–262 (ISCLGCGKSFRLKQYLVRHLDIH) form a C2H2-type 2 zinc finger. The C2H2-type 3; degenerate zinc finger occupies 268–291 (PQCPKCKMCFHHERTLFSHHLKNS). The segment at 420–442 (VFCRKCGQGFTKHCGLTEHTRIL) adopts a C2H2-type 4; degenerate zinc-finger fold. 11 C2H2-type zinc fingers span residues 448-470 (FWCAQCGRNFSQKGQLLRHQRLH), 476-498 (FQCTMCELRFHLKSRLRAHQLQH), 504-526 (FSCSECGRAFTHQCKLREHLRVH), 532-554 (FQCPECHKSFRLKGVLKAHQRIH), 560-582 (FSCGECGKGFIRQSKLTEHFRVH), 588-610 (FQCPECDRRFRLKGQLLSHQRLH), 616-638 (FQCPECGKSYRVKADMKAHQLLH), 644-665 (FSCQCGKGFAKQSKLVEHMRTH), 671-693 (FQCPKCDKSFRLKAQLLSHQGLH), 699-721 (FHCPECDKNFREKGHMLRHQRIH), and 727-749 (FACGDCGKGFIYKSKLAEHIRVH).

This sequence belongs to the krueppel C2H2-type zinc-finger protein family.

The protein resides in the nucleus. Its function is as follows. May be involved in transcriptional regulation. This is Zinc finger protein 786 (Znf786) from Mus musculus (Mouse).